A 301-amino-acid chain; its full sequence is Methionyl-tRNA formyltransferase (301 aa).

Ser109 to Pro112 serves as a coordination point for (6S)-5,6,7,8-tetrahydrofolate.

The protein belongs to the Fmt family.

The catalysed reaction is L-methionyl-tRNA(fMet) + (6R)-10-formyltetrahydrofolate = N-formyl-L-methionyl-tRNA(fMet) + (6S)-5,6,7,8-tetrahydrofolate + H(+). Functionally, attaches a formyl group to the free amino group of methionyl-tRNA(fMet). The formyl group appears to play a dual role in the initiator identity of N-formylmethionyl-tRNA by promoting its recognition by IF2 and preventing the misappropriation of this tRNA by the elongation apparatus. The chain is Methionyl-tRNA formyltransferase from Jannaschia sp. (strain CCS1).